Consider the following 85-residue polypeptide: Large ribosomal subunit protein bL27 (85 aa).

A disordered region spans residues 1–22 (MAHKKAGGSSRNGRDSHSKRLG).

The protein belongs to the bacterial ribosomal protein bL27 family.

This chain is Large ribosomal subunit protein bL27, found in Nitrosomonas europaea (strain ATCC 19718 / CIP 103999 / KCTC 2705 / NBRC 14298).